A 763-amino-acid chain; its full sequence is Phosphoglycerol transferase I (763 aa).

Transmembrane regions (helical) follow at residues 1-21 (MSELLSIALFLASVLIYAWKA), 26-46 (WWFAAILAVLGLFVVLNITLY), 77-97 (ILPGAGIVLALAAVFSALGWV), and 108-128 (FGYSLLALLLALGSVDASPAF).

The protein belongs to the OpgB family.

The protein resides in the cell inner membrane. The enzyme catalyses a phosphatidylglycerol + a membrane-derived-oligosaccharide D-glucose = a 1,2-diacyl-sn-glycerol + a membrane-derived-oligosaccharide 6-(glycerophospho)-D-glucose.. It functions in the pathway glycan metabolism; osmoregulated periplasmic glucan (OPG) biosynthesis. Transfers a phosphoglycerol residue from phosphatidylglycerol to the membrane-bound nascent glucan backbones. This chain is Phosphoglycerol transferase I, found in Citrobacter koseri (strain ATCC BAA-895 / CDC 4225-83 / SGSC4696).